We begin with the raw amino-acid sequence, 300 residues long: Bifunctional protein FolD 2 (300 aa).

Residues 165–167 (GRS), serine 190, and isoleucine 231 each bind NADP(+).

This sequence belongs to the tetrahydrofolate dehydrogenase/cyclohydrolase family. As to quaternary structure, homodimer.

The enzyme catalyses (6R)-5,10-methylene-5,6,7,8-tetrahydrofolate + NADP(+) = (6R)-5,10-methenyltetrahydrofolate + NADPH. It catalyses the reaction (6R)-5,10-methenyltetrahydrofolate + H2O = (6R)-10-formyltetrahydrofolate + H(+). Its pathway is one-carbon metabolism; tetrahydrofolate interconversion. Its function is as follows. Catalyzes the oxidation of 5,10-methylenetetrahydrofolate to 5,10-methenyltetrahydrofolate and then the hydrolysis of 5,10-methenyltetrahydrofolate to 10-formyltetrahydrofolate. The protein is Bifunctional protein FolD 2 of Pseudomonas savastanoi pv. phaseolicola (strain 1448A / Race 6) (Pseudomonas syringae pv. phaseolicola (strain 1448A / Race 6)).